Consider the following 190-residue polypeptide: Potassium-transporting ATPase KdpC subunit (190 aa).

The chain crosses the membrane as a helical span at residues 10–30 (TFIFLLLITGGVYPLLTTVLG).

The protein belongs to the KdpC family. In terms of assembly, the system is composed of three essential subunits: KdpA, KdpB and KdpC.

It localises to the cell inner membrane. Functionally, part of the high-affinity ATP-driven potassium transport (or Kdp) system, which catalyzes the hydrolysis of ATP coupled with the electrogenic transport of potassium into the cytoplasm. This subunit acts as a catalytic chaperone that increases the ATP-binding affinity of the ATP-hydrolyzing subunit KdpB by the formation of a transient KdpB/KdpC/ATP ternary complex. The sequence is that of Potassium-transporting ATPase KdpC subunit from Escherichia coli O139:H28 (strain E24377A / ETEC).